The following is a 37-amino-acid chain: Large ribosomal subunit protein bL36c (37 aa).

It belongs to the bacterial ribosomal protein bL36 family.

The protein resides in the plastid. It localises to the chloroplast. In Mesembryanthemum crystallinum (Common ice plant), this protein is Large ribosomal subunit protein bL36c.